Here is a 532-residue protein sequence, read N- to C-terminus: Flavin-containing monooxygenase 1 (532 aa).

Residues 1 to 510 are Lumenal-facing; it reads MVKRVAIVGA…TRTIQESPSS (510 aa). FAD-binding positions include 9–13, Glu32, 40–41, and 61–62; these read GAGVS, LW, and NS. Residues 60-61 and 195-198 each bind NADP(+); these read SN and SGTD. Residues 511 to 531 traverse the membrane as a helical segment; sequence FETLLKLFSFLALLIAVFLIF. Position 532 (Leu532) is a topological domain, cytoplasmic.

The protein belongs to the FMO family. FAD serves as cofactor. In terms of tissue distribution, liver.

It is found in the endoplasmic reticulum membrane. The catalysed reaction is hypotaurine + NADPH + O2 + H(+) = taurine + NADP(+) + H2O. It carries out the reaction hypotaurine + NADH + O2 + H(+) = taurine + NAD(+) + H2O. It catalyses the reaction trimethylamine + NADPH + O2 = trimethylamine N-oxide + NADP(+) + H2O. The enzyme catalyses N,N-dimethylaniline + NADPH + O2 + H(+) = N,N-dimethylaniline N-oxide + NADP(+) + H2O. In terms of biological role, broad spectrum monooxygenase that catalyzes the oxygenation of a wide variety of nitrogen- and sulfur-containing compounds including xenobiotics. Catalyzes the S-oxygenation of hypotaurine to produce taurine, an organic osmolyte involved in cell volume regulation as well as a variety of cytoprotective and developmental processes. In vitro, catalyzes the N-oxygenation of trimethylamine (TMA) to produce trimethylamine N-oxide (TMAO) and could therefore participate to the detoxification of this compound that is generated by the action of gut microbiota from dietary precursors such as choline, choline containing compounds, betaine or L-carnitine. The protein is Flavin-containing monooxygenase 1 of Mus musculus (Mouse).